The sequence spans 452 residues: MVTLKEALKFSAEEIKNLRAELEAKIIKEKELGAYVEQLANLEIAKLGEGVPIAIKDNIQVKGWSVTSASKILQGYVAPYNATVIEKLLSKNLAPFGRTNMDEFAMGSTTESSFYGKTLNPLNHAHVPGGSSGGSAAAVAAGLAVAALGSDTGGSIRQPAAFCGCVGLKPTYGRVSRYGLGAYSSSLDQIGPIAQNVEDAAILYDAIAGHDPKDSTSADVPFVSISDKIDGNKKLKICVIKNYVENASEQTKAALNLAIEKLKSHGHSVTYTNFEDSKYDVAAYYIIATAEASANLSRYDGVRYGRRAEARNLKELYVNSRSEGFGEEVKRRILLGTFVLSSGYYDAYYIKAQKARAHIKAQYEKILEENDLIFMPVAPSTAYKFGAHSDPLQAYLSDIYTISVNLAGLPAISVPVGKDDQNLNVSAQLIAKAWDEQTLINGAKSLENLIKG.

Residues K56 and S131 each act as charge relay system in the active site. The active-site Acyl-ester intermediate is the S155.

It belongs to the amidase family. GatA subfamily. In terms of assembly, heterotrimer of A, B and C subunits.

It catalyses the reaction L-glutamyl-tRNA(Gln) + L-glutamine + ATP + H2O = L-glutaminyl-tRNA(Gln) + L-glutamate + ADP + phosphate + H(+). Its function is as follows. Allows the formation of correctly charged Gln-tRNA(Gln) through the transamidation of misacylated Glu-tRNA(Gln) in organisms which lack glutaminyl-tRNA synthetase. The reaction takes place in the presence of glutamine and ATP through an activated gamma-phospho-Glu-tRNA(Gln). This chain is Glutamyl-tRNA(Gln) amidotransferase subunit A, found in Campylobacter concisus (strain 13826).